The primary structure comprises 367 residues: Peptide chain release factor 2 (367 aa).

An N5-methylglutamine modification is found at Gln254.

The protein belongs to the prokaryotic/mitochondrial release factor family. Methylated by PrmC. Methylation increases the termination efficiency of RF2.

Its subcellular location is the cytoplasm. Peptide chain release factor 2 directs the termination of translation in response to the peptide chain termination codons UGA and UAA. The sequence is that of Peptide chain release factor 2 from Variovorax paradoxus (strain S110).